The primary structure comprises 503 residues: Maturase K (503 aa).

This sequence belongs to the intron maturase 2 family. MatK subfamily.

Its subcellular location is the plastid. It is found in the chloroplast. Functionally, usually encoded in the trnK tRNA gene intron. Probably assists in splicing its own and other chloroplast group II introns. The sequence is that of Maturase K from Kunzea baxteri (Scarlet kunzea).